We begin with the raw amino-acid sequence, 870 residues long: MHEQYSPREIEAAAQSHWDAQKSFVVSEQPGKDTFYCLSMFPYPSGKLHMGHVRNYTIGDVIARYQRMQGKNVLQPMGWDAFGMPAENAAMKNQVAPAKWTYENIAYMKSQLKSLGLAIDWTREVTTCKPDYYRWEQWLFTRLFEKGVIYRKNGTVNWDPVDQTVLANEQVIDGRGWRSGALIEKREIPMYYFKITAYADELLSSLDELDGWPEQVKTMQRNWIGKSFGADIVFDYDVASIGIDGQLKVYSTRPDTLMGATYVAVAAEHPLAQRAAESNPAIAAFIAECKAGSVAEADMATMEKKGLATGQFVIHPLTGDKLPVFVANYVLWGYGEGAVMAVPAHDERDFEFANKYDLPIKQVYTGEGKDYDASTWQDWYGDKAGLTTINSGKYDGLDFSAAFDAIVGDLEASAHGARKTQFRLRDWGISRQRYWGCPIPIIHCDSCGDVPVPEDQLPVVLPEDVVPDGAGSPLAKMPEFYECTCPKCGAPAKRETDTMDTFVESSWYFARYASPNYEGGMVDPQAANHWLPVDQYIGGIEHAILHLLYARFFHKLMRDEGLVSSNEPFKNLLTQGMVVAETYYRTLENGGKDWFNPADVEVERDAKAKVIGAKLKSDGLPVEIGGTEKMSKSKNNGVDPQDMIDAYGADTCRLFMMFASPPDMSCEWSDAGVEGANRFLRRVWRLAHGHVSAGLPGKLDVASLSDEQKAVRRAIHLAIKQASNDIGQHHKFNTAIAQVMTLMNVLEKAATATEQDRALVQEGLEIVTLLLAPITPHISHELWQRLGHADAVIDAQWPQVDESALVQDSLTLVVQVNGKLRGQIEVPASASREDVEAAARANENVLRFTEGLSIRKVIVVPGKLVNIVAN.

The 'HIGH' region motif lies at 42-52; sequence PYPSGKLHMGH. Residues 629-633 carry the 'KMSKS' region motif; that stretch reads KMSKS. Position 632 (Lys632) interacts with ATP.

Belongs to the class-I aminoacyl-tRNA synthetase family.

It is found in the cytoplasm. The catalysed reaction is tRNA(Leu) + L-leucine + ATP = L-leucyl-tRNA(Leu) + AMP + diphosphate. In Ectopseudomonas mendocina (strain ymp) (Pseudomonas mendocina), this protein is Leucine--tRNA ligase.